A 179-amino-acid chain; its full sequence is Large ribosomal subunit protein uL6 (179 aa).

The protein belongs to the universal ribosomal protein uL6 family. Part of the 50S ribosomal subunit.

Its function is as follows. This protein binds to the 23S rRNA, and is important in its secondary structure. It is located near the subunit interface in the base of the L7/L12 stalk, and near the tRNA binding site of the peptidyltransferase center. The chain is Large ribosomal subunit protein uL6 from Clostridium acetobutylicum (strain ATCC 824 / DSM 792 / JCM 1419 / IAM 19013 / LMG 5710 / NBRC 13948 / NRRL B-527 / VKM B-1787 / 2291 / W).